The sequence spans 183 residues: UPF0200 protein Memar_1556 (183 aa).

Position 8-15 (8-15 (GMPASGKG)) interacts with ATP.

Belongs to the UPF0200 family.

The sequence is that of UPF0200 protein Memar_1556 from Methanoculleus marisnigri (strain ATCC 35101 / DSM 1498 / JR1).